A 348-amino-acid chain; its full sequence is Galactose-1-phosphate uridylyltransferase (348 aa).

28–31 contributes to the UDP-alpha-D-glucose binding site; that stretch reads RAKR. Zn(2+) is bound by residues Cys52 and Cys55. UDP-alpha-D-glucose is bound by residues Val61 and 77–78; that span reads ND. Residue His115 participates in Zn(2+) binding. UDP-alpha-D-glucose is bound by residues Asn153 and 159–161; that span reads GCS. His164 contributes to the Zn(2+) binding site. His166 functions as the Tele-UMP-histidine intermediate in the catalytic mechanism. Gln168 serves as a coordination point for UDP-alpha-D-glucose. Fe cation contacts are provided by Glu182, His281, His296, and His298. UDP-alpha-D-glucose is bound by residues 311–312, 316–317, and Gln323; these read KF and YE.

This sequence belongs to the galactose-1-phosphate uridylyltransferase type 1 family. The cofactor is Zn(2+).

The catalysed reaction is alpha-D-galactose 1-phosphate + UDP-alpha-D-glucose = alpha-D-glucose 1-phosphate + UDP-alpha-D-galactose. Its pathway is carbohydrate metabolism; galactose metabolism. In Salmonella typhimurium (strain LT2 / SGSC1412 / ATCC 700720), this protein is Galactose-1-phosphate uridylyltransferase (galT).